Consider the following 420-residue polypeptide: Exodeoxyribonuclease 7 large subunit (420 aa).

It belongs to the XseA family. Heterooligomer composed of large and small subunits.

The protein resides in the cytoplasm. The catalysed reaction is Exonucleolytic cleavage in either 5'- to 3'- or 3'- to 5'-direction to yield nucleoside 5'-phosphates.. In terms of biological role, bidirectionally degrades single-stranded DNA into large acid-insoluble oligonucleotides, which are then degraded further into small acid-soluble oligonucleotides. The polypeptide is Exodeoxyribonuclease 7 large subunit (Helicobacter pylori (strain HPAG1)).